The chain runs to 1434 residues: Receptor-type tyrosine-protein phosphatase U (1434 aa).

The N-terminal stretch at 1-17 (MRSARALLLALALRVCA) is a signal peptide. At 18–748 (LDSETPSAGC…QHSEEMGLIL (731 aa)) the chain is on the extracellular side. Positions 25–187 (AGCTFEEDDD…ILLLNYPCSK (163 aa)) constitute an MAM domain. An N-linked (GlcNAc...) asparagine glycan is attached at Asn-74. In terms of domain architecture, Ig-like C2-type spans 189–274 (PHFSRLGDVE…TQSSRGSGVS (86 aa)). Residues Cys-209 and Cys-263 are joined by a disulfide bond. Fibronectin type-III domains are found at residues 287–382 (PIAP…CAEP), 385–483 (APKG…TDED), 484–590 (VPGG…SAPT), and 597–677 (PSPL…TEAK). Asn-409 carries an N-linked (GlcNAc...) asparagine glycan. N-linked (GlcNAc...) asparagine glycosylation is present at Asn-684. Residues 749-769 (GICAGGLVVLIILLGAIIVVI) traverse the membrane as a helical segment. Topologically, residues 770–1434 (RKGKPVNMTK…LEYLESLETR (665 aa)) are cytoplasmic. Residues 824-839 (RGDQRSSVVNESSSLL) are compositionally biased toward polar residues. The tract at residues 824 to 851 (RGDQRSSVVNESSSLLGGSPRRQCGRKG) is disordered. 2 consecutive Tyrosine-protein phosphatase domains span residues 876–1132 (KTAE…ILEA) and 1164–1427 (LREE…ALEY). Residues Glu-1041, 1073 to 1079 (CSAGTGR), and Gln-1117 contribute to the substrate site. Cys-1073 acts as the Phosphocysteine intermediate in catalysis. Cys-1368 serves as the catalytic Phosphocysteine intermediate.

The protein belongs to the protein-tyrosine phosphatase family. Receptor class 2B subfamily.

The protein resides in the cell junction. It is found in the cell membrane. It carries out the reaction O-phospho-L-tyrosyl-[protein] + H2O = L-tyrosyl-[protein] + phosphate. Tyrosine-protein phosphatase which dephosphorylates CTNNB1. May function in cell proliferation and migration and play a role in the maintenance of epithelial integrity. The protein is Receptor-type tyrosine-protein phosphatase U (PTPRU) of Gallus gallus (Chicken).